The chain runs to 1063 residues: Unconventional myosin-Ic (1063 aa).

M1 is modified (N-acetylmethionine). One can recognise a Myosin motor domain in the interval 47–731 (GVQDFVLLEN…TLFATEDALE (685 aa)). ATP-binding positions include N88, Y96, 139–148 (SGESGAGKTE), and 192–196 (NDNSS). The residue at position 383 (K383) is an N6-methyllysine. S408 bears the Phosphoserine mark. N6-acetyllysine is present on K486. At S536 the chain carries Phosphoserine. Residues 608 to 630 (LLELVEILKSKEPAYVRCIKPND) form an actin-binding region. 2 consecutive IQ domains span residues 734 to 757 (RQSL…FLRV) and 758 to 786 (KRSA…AAQT). S864 and S1041 each carry phosphoserine. Positions 885-1059 (KDNYPQSVPR…NGHLAVVAPR (175 aa)) constitute a TH1 domain.

The protein belongs to the TRAFAC class myosin-kinesin ATPase superfamily. Myosin family. In terms of assembly, interacts (via its IQ motifs) with CABP1 and CIB1; the interaction with CABP1 and CIB1 is calcium-dependent. Interacts (via tail domain) with PLEKHB1 (via PH domain); the interaction is not affected by the presence or absence of calcium and CALM. Interacts with POLR1A. Interacts with POLR2A. Component of the B-WICH complex, at least composed of SMARCA5/SNF2H, BAZ1B/WSTF, SF3B1, DEK, MYO1C, ERCC6, MYBBP1A and DDX21. Interacts (via its IQ motifs) with CALM; this precludes interaction with YWHAB. Interacts with YWHAB; this precludes interaction with CALM. Interacts with RPS6. Interacts with actin. Interacts with LLPH. Interacts with GLUT4. Interacts (via its IQ motifs) with SH3BGRL3; the interaction is dependent on calcium and takes place at membrane ruffles. In terms of processing, isoform 2 contains a N-acetylmethionine at position 1. As to expression, widely expressed.

The protein resides in the cytoplasm. It localises to the nucleus. The protein localises to the cell cortex. Its subcellular location is the cell projection. It is found in the ruffle membrane. The protein resides in the cytoplasmic vesicle. It localises to the stereocilium membrane. The protein localises to the nucleolus. Its subcellular location is the nucleoplasm. Functionally, myosins are actin-based motor molecules with ATPase activity. Unconventional myosins serve in intracellular movements. Their highly divergent tails are presumed to bind to membranous compartments, which would be moved relative to actin filaments. Involved in glucose transporter recycling in response to insulin by regulating movement of intracellular GLUT4-containing vesicles to the plasma membrane. Component of the hair cell's (the sensory cells of the inner ear) adaptation-motor complex. Acts as a mediator of adaptation of mechanoelectrical transduction in stereocilia of vestibular hair cells. Binds phosphoinositides and links the actin cytoskeleton to cellular membranes. In terms of biological role, isoform 3 is involved in regulation of transcription. Associated with transcriptional active ribosomal genes. Appears to cooperate with the WICH chromatin-remodeling complex to facilitate transcription. Necessary for the formation of the first phosphodiester bond during transcription initiation. This Bos taurus (Bovine) protein is Unconventional myosin-Ic (MYO1C).